The following is a 417-amino-acid chain: Phosphoglycerate kinase (417 aa).

Positions 23, 24, 25, 26, 39, 40, 63, 64, 66, 67, 122, 123, 170, and 171 each coordinate (2R)-3-phosphoglycerate. Position 214 (G214) interacts with ADP. G214 provides a ligand contact to CDP. Positions 215 and 216 each coordinate AMP. Residue A215 participates in ATP binding. A215 lines the Mg(2+) pocket. CDP is bound at residue D219. D219 contributes to the Mg(2+) binding site. Position 220 (K220) interacts with AMP. Residue K220 participates in ATP binding. ADP is bound at residue G238. Residue G238 participates in CDP binding. AMP contacts are provided by A239 and G313. The ATP site is built by A239 and G313. CDP is bound by residues G338 and F343. Position 343 (F343) interacts with ADP. E344 is a binding site for AMP. E344, D375, and T376 together coordinate ATP. D375 provides a ligand contact to Mg(2+).

The protein belongs to the phosphoglycerate kinase family. As to quaternary structure, monomer. Mg(2+) serves as cofactor.

The protein resides in the cytoplasm. The protein localises to the mitochondrion. The enzyme catalyses (2R)-3-phosphoglycerate + ATP = (2R)-3-phospho-glyceroyl phosphate + ADP. It participates in carbohydrate degradation; glycolysis; pyruvate from D-glyceraldehyde 3-phosphate: step 2/5. Functionally, catalyzes one of the two ATP producing reactions in the glycolytic pathway via the reversible conversion of 1,3-diphosphoglycerate to 3-phosphoglycerate. Both L- and D- forms of purine and pyrimidine nucleotides can be used as substrates, but the activity is much lower on pyrimidines. Negatively regulates the biosynthesis of acetyl-CoA from pyruvate in the mitochondrion. The chain is Phosphoglycerate kinase (pgkA) from Aspergillus oryzae (strain ATCC 42149 / RIB 40) (Yellow koji mold).